The primary structure comprises 406 residues: Arginine biosynthesis bifunctional protein ArgJ (406 aa).

Substrate is bound by residues T152, K179, T190, E277, N401, and S406. Catalysis depends on T190, which acts as the Nucleophile.

This sequence belongs to the ArgJ family. In terms of assembly, heterotetramer of two alpha and two beta chains.

The protein resides in the cytoplasm. It carries out the reaction N(2)-acetyl-L-ornithine + L-glutamate = N-acetyl-L-glutamate + L-ornithine. It catalyses the reaction L-glutamate + acetyl-CoA = N-acetyl-L-glutamate + CoA + H(+). The protein operates within amino-acid biosynthesis; L-arginine biosynthesis; L-ornithine and N-acetyl-L-glutamate from L-glutamate and N(2)-acetyl-L-ornithine (cyclic): step 1/1. Its pathway is amino-acid biosynthesis; L-arginine biosynthesis; N(2)-acetyl-L-ornithine from L-glutamate: step 1/4. Functionally, catalyzes two activities which are involved in the cyclic version of arginine biosynthesis: the synthesis of N-acetylglutamate from glutamate and acetyl-CoA as the acetyl donor, and of ornithine by transacetylation between N(2)-acetylornithine and glutamate. The polypeptide is Arginine biosynthesis bifunctional protein ArgJ (Neisseria meningitidis serogroup A / serotype 4A (strain DSM 15465 / Z2491)).